A 291-amino-acid chain; its full sequence is Tyrosine recombinase XerD (291 aa).

The Core-binding (CB) domain maps to 1 to 82; it reads MEEGLIDRLL…ACKRLYIWME (82 aa). One can recognise a Tyr recombinase domain in the interval 103–285; that stretch reads NIPTLITEQQ…ANVWLQGVVK (183 aa). Residues R143, K167, H237, R240, and H263 contribute to the active site. Y272 (O-(3'-phospho-DNA)-tyrosine intermediate) is an active-site residue.

The protein belongs to the 'phage' integrase family. XerD subfamily. As to quaternary structure, forms a cyclic heterotetrameric complex composed of two molecules of XerC and two molecules of XerD.

It localises to the cytoplasm. Its function is as follows. Site-specific tyrosine recombinase, which acts by catalyzing the cutting and rejoining of the recombining DNA molecules. The XerC-XerD complex is essential to convert dimers of the bacterial chromosome into monomers to permit their segregation at cell division. It also contributes to the segregational stability of plasmids. This chain is Tyrosine recombinase XerD, found in Neisseria meningitidis serogroup A / serotype 4A (strain DSM 15465 / Z2491).